The primary structure comprises 266 residues: Undecaprenyl-diphosphatase (266 aa).

7 helical membrane-spanning segments follow: residues 41 to 61 (NLAF…VILW), 82 to 102 (YVIN…FFKD), 106 to 126 (AIFG…AALL), 140 to 160 (ISMK…LPGL), 180 to 200 (LAQF…LLDG), 213 to 233 (IPTL…CLAC), and 245 to 265 (LIYF…VSQL).

The protein belongs to the UppP family.

The protein localises to the cell inner membrane. It carries out the reaction di-trans,octa-cis-undecaprenyl diphosphate + H2O = di-trans,octa-cis-undecaprenyl phosphate + phosphate + H(+). Catalyzes the dephosphorylation of undecaprenyl diphosphate (UPP). Confers resistance to bacitracin. This is Undecaprenyl-diphosphatase from Bacteroides fragilis (strain YCH46).